Consider the following 116-residue polypeptide: C-C motif chemokine 6 (116 aa).

The signal sequence occupies residues 1–21 (MRNSKTAISFFILVAVLGSQA). Cystine bridges form between cysteine 50/cysteine 73, cysteine 51/cysteine 89, and cysteine 60/cysteine 100.

This sequence belongs to the intercrine beta (chemokine CC) family. Post-translationally, the N-terminal is proteolytically cleaved by proteases associated with inflammatory responses. The processed forms CL6(22-95) and CCL6(23-95) show increase in CCR1-mediated signaling and chemotaxis assays in vitro. As to expression, expressed in myelopoietic bone marrow cultures stimulated by GM-CSF.

It localises to the secreted. Functionally, chemotactic factor that attracts mostly macrophage, but it can also attract B cells, CD4(+) lymphocytes and eosinophils. The chain is C-C motif chemokine 6 (Ccl6) from Mus musculus (Mouse).